The chain runs to 155 residues: Ribosomal RNA large subunit methyltransferase H (155 aa).

S-adenosyl-L-methionine is bound by residues Leu73, Gly104, and 123 to 128 (LSPLTL).

Belongs to the RNA methyltransferase RlmH family. Homodimer.

The protein localises to the cytoplasm. It carries out the reaction pseudouridine(1915) in 23S rRNA + S-adenosyl-L-methionine = N(3)-methylpseudouridine(1915) in 23S rRNA + S-adenosyl-L-homocysteine + H(+). In terms of biological role, specifically methylates the pseudouridine at position 1915 (m3Psi1915) in 23S rRNA. This Pseudomonas fluorescens (strain ATCC BAA-477 / NRRL B-23932 / Pf-5) protein is Ribosomal RNA large subunit methyltransferase H.